The chain runs to 206 residues: uncharacterized protein (206 aa).

A signal peptide spans 1-18; it reads MKTYSLLLGLFISFGVLA.

This is an uncharacterized protein from Haemophilus influenzae (strain ATCC 51907 / DSM 11121 / KW20 / Rd).